A 635-amino-acid chain; its full sequence is Chaperone protein HtpG (635 aa).

The a; substrate-binding stretch occupies residues 1–344; the sequence is MSETATTNKE…SNDLPLNVSR (344 aa). The interval 345–561 is b; it reads EILQDNKITQ…DYEMGTQMAK (217 aa). A c region spans residues 562-635; that stretch reads LLAAAGQPVP…AVNQLLAPSH (74 aa).

This sequence belongs to the heat shock protein 90 family. As to quaternary structure, homodimer.

Its subcellular location is the cytoplasm. Molecular chaperone. Has ATPase activity. In Vibrio cholerae serotype O1 (strain ATCC 39541 / Classical Ogawa 395 / O395), this protein is Chaperone protein HtpG.